A 551-amino-acid polypeptide reads, in one-letter code: Probable 4-coumarate--CoA ligase 2 (551 aa).

6 residues coordinate ATP: S205, S206, G207, T208, T209, and K213. (E)-4-coumaroyl-AMP is bound by residues Y253 and T257. K274 serves as a coordination point for CoA. The tract at residues 276-346 is SBD1; that stretch reads EFVRFLDLIQ…RFKGKLIIKQ (71 aa). 4 residues coordinate (E)-4-coumaroyl-AMP: A323, Q346, G347, and T351. The ATP site is built by Q346, G347, T351, D430, and R445. The interval 347-409 is SBD2; that stretch reads GYGATELSPA…IKGPNVMLGY (63 aa). K447 and K451 together coordinate (E)-4-coumaroyl-AMP. K453 and G454 together coordinate CoA. K537 lines the ATP pocket.

This sequence belongs to the ATP-dependent AMP-binding enzyme family. Requires Mg(2+) as cofactor.

The enzyme catalyses (E)-4-coumarate + ATP + CoA = (E)-4-coumaroyl-CoA + AMP + diphosphate. The catalysed reaction is (E)-4-coumarate + ATP + H(+) = (E)-4-coumaroyl-AMP + diphosphate. It catalyses the reaction (E)-4-coumaroyl-AMP + CoA = (E)-4-coumaroyl-CoA + AMP + H(+). Its pathway is phytoalexin biosynthesis; 3,4',5-trihydroxystilbene biosynthesis; 3,4',5-trihydroxystilbene from trans-4-coumarate: step 1/2. Functionally, carboxylate--CoA ligase that may use 4-coumarate as substrate. Follows a two-step reaction mechanism, wherein the carboxylate substrate first undergoes adenylation by ATP, followed by a thioesterification in the presence of CoA to yield the final CoA thioester. The chain is Probable 4-coumarate--CoA ligase 2 (4cl2) from Dictyostelium discoideum (Social amoeba).